A 154-amino-acid polypeptide reads, in one-letter code: Transcription antitermination protein NusB (154 aa).

Belongs to the NusB family.

In terms of biological role, involved in transcription antitermination. Required for transcription of ribosomal RNA (rRNA) genes. Binds specifically to the boxA antiterminator sequence of the ribosomal RNA (rrn) operons. The sequence is that of Transcription antitermination protein NusB from Methylobacillus flagellatus (strain ATCC 51484 / DSM 6875 / VKM B-1610 / KT).